The following is a 454-amino-acid chain: Metalloprotease MTH_856 (454 aa).

The disordered stretch occupies residues 92–115; that stretch reads QVGSGAPSVDKTMVRSSRPPSDVP.

It belongs to the peptidase U62 family.

Probable metalloprotease. This Methanothermobacter thermautotrophicus (strain ATCC 29096 / DSM 1053 / JCM 10044 / NBRC 100330 / Delta H) (Methanobacterium thermoautotrophicum) protein is Metalloprotease MTH_856.